The sequence spans 202 residues: Kunitz trypsin inhibitor 7 (202 aa).

The signal sequence occupies residues 1-25; it reads MKTFRSMLISLLLVAITTTSGVVEG. C69 and C115 are joined by a disulfide. N-linked (GlcNAc...) asparagine glycosylation is found at N93, N136, N144, and N198.

It belongs to the protease inhibitor I3 (leguminous Kunitz-type inhibitor) family.

Its function is as follows. Exhibits Kunitz trypsin protease inhibitor activity. The sequence is that of Kunitz trypsin inhibitor 7 from Arabidopsis thaliana (Mouse-ear cress).